The following is a 143-amino-acid chain: Putative protein FPV235 (143 aa).

This is Putative protein FPV235 from Vertebrata (FPV).